We begin with the raw amino-acid sequence, 207 residues long: Small ribosomal subunit protein uS4 (207 aa).

A disordered region spans residues 30-51 (DKSKFDSKPGQHGRTSGARTSD). The S4 RNA-binding domain maps to 97–157 (SRLDNVVYRM…EKSKKQGRIA (61 aa)).

It belongs to the universal ribosomal protein uS4 family. As to quaternary structure, part of the 30S ribosomal subunit. Contacts protein S5. The interaction surface between S4 and S5 is involved in control of translational fidelity.

Functionally, one of the primary rRNA binding proteins, it binds directly to 16S rRNA where it nucleates assembly of the body of the 30S subunit. With S5 and S12 plays an important role in translational accuracy. In Verminephrobacter eiseniae (strain EF01-2), this protein is Small ribosomal subunit protein uS4.